The sequence spans 226 residues: B-cell antigen receptor complex-associated protein alpha chain (226 aa).

The N-terminal stretch at 1-32 is a signal peptide; the sequence is MPGGPGVLQALPATIFLLFLLSAVYLGPGCQA. The region spanning 33–116 is the Ig-like C2-type domain; it reads LWMHKVPASL…RVQEGNESYQ (84 aa). At 33 to 143 the chain is on the extracellular side; it reads LWMHKVPASL…LDMGEGTKNR (111 aa). A disulfide bond links Cys-54 and Cys-106. N-linked (GlcNAc...) asparagine glycosylation is found at Asn-57, Asn-63, Asn-73, Asn-88, Asn-97, and Asn-112. Residues 144–165 form a helical membrane-spanning segment; it reads IITAEGIILLFCAVVPGTLLLF. Topologically, residues 166–226 are cytoplasmic; the sequence is RKRWQNEKLG…NIGDVQLEKP (61 aa). One can recognise an ITAM domain in the interval 177–205; it reads DAGDEYEDENLYEGLNLDDCSMYEDISRG. Tyr-188 and Tyr-199 each carry phosphotyrosine; by SRC-type Tyr-kinases. Arg-204 is modified (asymmetric dimethylarginine; by PRMT1). At Tyr-210 the chain carries Phosphotyrosine; by Tyr-kinases.

Heterodimer of alpha and beta chains; disulfide-linked. Part of the B-cell antigen receptor complex where the alpha/beta chain heterodimer is non-covalently associated with an antigen-specific membrane-bound surface immunoglobulin of two heavy chains and two light chains. Interacts through its phosphorylated ITAM domain with the SH2 domains of SYK which stimulates SYK autophosphorylation and activation. Also interacts, when phosphorylated on Tyr-210, with the SH2 domain of BLNK/SLP65, bringing BLNK into proximity with SYK and allowing SYK to phosphorylate BLNK which is necessary for trafficking of the BCR to late endosomes. Interacts with Src-family tyrosine kinases including FYN and LYN, increasing their activity. Phosphorylated on tyrosine, serine and threonine residues upon B-cell activation. Phosphorylation of tyrosine residues by Src-family kinases is an early and essential feature of the BCR signaling cascade. The phosphorylated tyrosines serve as docking sites for SH2-domain containing kinases, leading to their activation which in turn leads to phosphorylation of downstream targets. Phosphorylated by LYN. Phosphorylation of serine and threonine residues may prevent subsequent tyrosine phosphorylation. Post-translationally, arginine methylation in the ITAM domain may interfere with the binding of SYK. It promotes signals leading to B-cell differentiation. As to expression, B-cells.

The protein resides in the cell membrane. Required in cooperation with CD79B for initiation of the signal transduction cascade activated by binding of antigen to the B-cell antigen receptor complex (BCR) which leads to internalization of the complex, trafficking to late endosomes and antigen presentation. Also required for BCR surface expression and for efficient differentiation of pro- and pre-B-cells. Stimulates SYK autophosphorylation and activation. Binds to BLNK, bringing BLNK into proximity with SYK and allowing SYK to phosphorylate BLNK. Also interacts with and increases activity of some Src-family tyrosine kinases. Represses BCR signaling during development of immature B-cells. In Homo sapiens (Human), this protein is B-cell antigen receptor complex-associated protein alpha chain (CD79A).